The chain runs to 363 residues: Chorismate synthase (363 aa).

Position 47 (R47) interacts with NADP(+). FMN is bound by residues R124–S126, G285, K300–T304, and R326.

This sequence belongs to the chorismate synthase family. In terms of assembly, homotetramer. FMNH2 is required as a cofactor.

The catalysed reaction is 5-O-(1-carboxyvinyl)-3-phosphoshikimate = chorismate + phosphate. The protein operates within metabolic intermediate biosynthesis; chorismate biosynthesis; chorismate from D-erythrose 4-phosphate and phosphoenolpyruvate: step 7/7. Functionally, catalyzes the anti-1,4-elimination of the C-3 phosphate and the C-6 proR hydrogen from 5-enolpyruvylshikimate-3-phosphate (EPSP) to yield chorismate, which is the branch point compound that serves as the starting substrate for the three terminal pathways of aromatic amino acid biosynthesis. This reaction introduces a second double bond into the aromatic ring system. This Opitutus terrae (strain DSM 11246 / JCM 15787 / PB90-1) protein is Chorismate synthase.